The primary structure comprises 141 residues: Nucleoside diphosphate kinase (141 aa).

Residues Lys9, Phe57, Arg85, Thr91, Arg102, and Asn112 each contribute to the ATP site. The Pros-phosphohistidine intermediate role is filled by His115.

This sequence belongs to the NDK family. In terms of assembly, homotetramer. Mg(2+) is required as a cofactor.

It localises to the cytoplasm. It carries out the reaction a 2'-deoxyribonucleoside 5'-diphosphate + ATP = a 2'-deoxyribonucleoside 5'-triphosphate + ADP. The enzyme catalyses a ribonucleoside 5'-diphosphate + ATP = a ribonucleoside 5'-triphosphate + ADP. Functionally, major role in the synthesis of nucleoside triphosphates other than ATP. The ATP gamma phosphate is transferred to the NDP beta phosphate via a ping-pong mechanism, using a phosphorylated active-site intermediate. The polypeptide is Nucleoside diphosphate kinase (Chlamydia trachomatis serovar A (strain ATCC VR-571B / DSM 19440 / HAR-13)).